Here is a 97-residue protein sequence, read N- to C-terminus: Protein RESPONSE TO LOW SULFUR 3 (97 aa).

Residues 8–42 are a coiled coil; the sequence is VTVAAEEVEELRRRNGELEREMEEMKKEMVQLWRR.

This chain is Protein RESPONSE TO LOW SULFUR 3, found in Arabidopsis thaliana (Mouse-ear cress).